The following is a 152-amino-acid chain: Putative pre-16S rRNA nuclease (152 aa).

It belongs to the YqgF nuclease family.

It localises to the cytoplasm. Functionally, could be a nuclease involved in processing of the 5'-end of pre-16S rRNA. The protein is Putative pre-16S rRNA nuclease of Sphingopyxis alaskensis (strain DSM 13593 / LMG 18877 / RB2256) (Sphingomonas alaskensis).